We begin with the raw amino-acid sequence, 611 residues long: Dihydroxy-acid dehydratase (611 aa).

Mg(2+) is bound at residue Asp81. Position 122 (Cys122) interacts with [2Fe-2S] cluster. Residues Asp123 and Lys124 each coordinate Mg(2+). Lys124 carries the post-translational modification N6-carboxylysine. [2Fe-2S] cluster is bound at residue Cys195. Mg(2+) is bound at residue Glu491. Residue Ser517 is the Proton acceptor of the active site.

This sequence belongs to the IlvD/Edd family. Homodimer. [2Fe-2S] cluster serves as cofactor. The cofactor is Mg(2+).

It carries out the reaction (2R)-2,3-dihydroxy-3-methylbutanoate = 3-methyl-2-oxobutanoate + H2O. The enzyme catalyses (2R,3R)-2,3-dihydroxy-3-methylpentanoate = (S)-3-methyl-2-oxopentanoate + H2O. The protein operates within amino-acid biosynthesis; L-isoleucine biosynthesis; L-isoleucine from 2-oxobutanoate: step 3/4. It participates in amino-acid biosynthesis; L-valine biosynthesis; L-valine from pyruvate: step 3/4. Functionally, functions in the biosynthesis of branched-chain amino acids. Catalyzes the dehydration of (2R,3R)-2,3-dihydroxy-3-methylpentanoate (2,3-dihydroxy-3-methylvalerate) into 2-oxo-3-methylpentanoate (2-oxo-3-methylvalerate) and of (2R)-2,3-dihydroxy-3-methylbutanoate (2,3-dihydroxyisovalerate) into 2-oxo-3-methylbutanoate (2-oxoisovalerate), the penultimate precursor to L-isoleucine and L-valine, respectively. In Brucella melitensis biotype 1 (strain ATCC 23456 / CCUG 17765 / NCTC 10094 / 16M), this protein is Dihydroxy-acid dehydratase.